We begin with the raw amino-acid sequence, 156 residues long: Small ribosomal subunit protein uS7 (156 aa).

Belongs to the universal ribosomal protein uS7 family. In terms of assembly, part of the 30S ribosomal subunit. Contacts proteins S9 and S11.

Its function is as follows. One of the primary rRNA binding proteins, it binds directly to 16S rRNA where it nucleates assembly of the head domain of the 30S subunit. Is located at the subunit interface close to the decoding center, probably blocks exit of the E-site tRNA. The chain is Small ribosomal subunit protein uS7 from Photobacterium profundum (strain SS9).